The chain runs to 509 residues: 2-succinyl-5-enolpyruvyl-6-hydroxy-3-cyclohexene-1-carboxylate synthase (509 aa).

Belongs to the TPP enzyme family. MenD subfamily. Homodimer. Mg(2+) is required as a cofactor. Mn(2+) serves as cofactor. The cofactor is thiamine diphosphate.

The catalysed reaction is isochorismate + 2-oxoglutarate + H(+) = 5-enolpyruvoyl-6-hydroxy-2-succinyl-cyclohex-3-ene-1-carboxylate + CO2. It participates in quinol/quinone metabolism; 1,4-dihydroxy-2-naphthoate biosynthesis; 1,4-dihydroxy-2-naphthoate from chorismate: step 2/7. Its pathway is quinol/quinone metabolism; menaquinone biosynthesis. In terms of biological role, catalyzes the thiamine diphosphate-dependent decarboxylation of 2-oxoglutarate and the subsequent addition of the resulting succinic semialdehyde-thiamine pyrophosphate anion to isochorismate to yield 2-succinyl-5-enolpyruvyl-6-hydroxy-3-cyclohexene-1-carboxylate (SEPHCHC). This chain is 2-succinyl-5-enolpyruvyl-6-hydroxy-3-cyclohexene-1-carboxylate synthase, found in Corynebacterium diphtheriae (strain ATCC 700971 / NCTC 13129 / Biotype gravis).